Reading from the N-terminus, the 561-residue chain is Asparagine synthetase [glutamine-hydrolyzing] (561 aa).

The For GATase activity role is filled by cysteine 2. One can recognise a Glutamine amidotransferase type-2 domain in the interval cysteine 2–lysine 191. L-glutamine-binding positions include arginine 49–valine 53, asparagine 75–glutamate 77, and aspartate 97. The Asparagine synthetase domain occupies histidine 213–tyrosine 536. Residues leucine 256, isoleucine 288, and serine 363–glycine 364 contribute to the ATP site. Lysine 385 is subject to N6-acetyllysine. Position 545 is a phosphothreonine (threonine 545). Serine 557 carries the phosphoserine modification.

The enzyme catalyses L-aspartate + L-glutamine + ATP + H2O = L-asparagine + L-glutamate + AMP + diphosphate + H(+). It functions in the pathway amino-acid biosynthesis; L-asparagine biosynthesis; L-asparagine from L-aspartate (L-Gln route): step 1/1. The protein is Asparagine synthetase [glutamine-hydrolyzing] (ASNS) of Homo sapiens (Human).